Reading from the N-terminus, the 83-residue chain is U5-theraphotoxin-Hs1a 5 (83 aa).

Residues 1–21 (MKTSMFLTLTGLVLLFVVCYA) form the signal peptide. The propeptide occupies 22 to 49 (SESEEKEFPKELPSSIFAADSDFKVEER). 3 disulfides stabilise this stretch: C51–C63, C56–C68, and C62–C75.

It belongs to the neurotoxin 10 (Hwtx-1) family. 51 (Hntx-8) subfamily. Hntx-8 sub-subfamily. In terms of tissue distribution, expressed by the venom gland.

The protein resides in the secreted. Agglutinates erythrocytes. In Cyriopagopus schmidti (Chinese bird spider), this protein is U5-theraphotoxin-Hs1a 5.